A 1396-amino-acid chain; its full sequence is DNA ligase 6 (1396 aa).

2 disordered regions span residues 441–464 and 562–599; these read KNACEDGGENVPSSRGPILHDTTP and MNLTKGTISPGKRGKSSGSKSNKKAKKDPKSKPVGPGQ. 2 consecutive short sequence motifs (nuclear localization signal) follow at residues 572 to 579 and 886 to 893; these read GKRGKSSG and LRKISVQT. Glutamate 1037 is an ATP binding site. Lysine 1039 (N6-AMP-lysine intermediate) is an active-site residue. Positions 1044, 1060, 1092, and 1136 each coordinate ATP. Glutamate 1092 is a binding site for Mg(2+). Residue glutamate 1207 participates in Mg(2+) binding. Lysine 1212, arginine 1225, and lysine 1231 together coordinate ATP.

It belongs to the ATP-dependent DNA ligase family. The cofactor is Mg(2+). Mostly expressed in buds and flowers, and, to a lower extent, in stems, leaves, siliques and seeds.

It localises to the nucleus. The catalysed reaction is ATP + (deoxyribonucleotide)n-3'-hydroxyl + 5'-phospho-(deoxyribonucleotide)m = (deoxyribonucleotide)n+m + AMP + diphosphate.. Functionally, DNA ligase that seals nicks in double-stranded DNA during DNA replication, DNA recombination and DNA repair. Required to maintain seed viability (e.g. longevity and storability) and during seed germination, probably by repairing DNA damage accumulated during seed development, storage and/or imbibition. Facilitates seed germination in cold conditions (2 degrees Celsius) and under oxidative stress (e.g. menadione, a genotoxic agent). Involved in repair of X-ray-induced damage. Limits stable root transformation by A.tumefaciens T-DNA. This chain is DNA ligase 6, found in Arabidopsis thaliana (Mouse-ear cress).